We begin with the raw amino-acid sequence, 130 residues long: Protein ApaG (130 aa).

One can recognise an ApaG domain in the interval 3 to 127; sequence RAVTRHIEVT…FSLDSPDGKR (125 aa).

The chain is Protein ApaG from Bradyrhizobium sp. (strain ORS 278).